The sequence spans 22 residues: Thylakoid lumenal 11 kDa protein (22 aa).

The interval 1–22 is disordered; sequence FKGGGPYGQGVTRGQDLSGKDF.

This sequence to A.thaliana At2g44920.

The protein resides in the plastid. It localises to the chloroplast thylakoid lumen. This Spinacia oleracea (Spinach) protein is Thylakoid lumenal 11 kDa protein.